Reading from the N-terminus, the 444-residue chain is Probable glycine dehydrogenase (decarboxylating) subunit 1 (444 aa).

The protein belongs to the GcvP family. N-terminal subunit subfamily. In terms of assembly, the glycine cleavage system is composed of four proteins: P, T, L and H. In this organism, the P 'protein' is a heterodimer of two subunits.

The enzyme catalyses N(6)-[(R)-lipoyl]-L-lysyl-[glycine-cleavage complex H protein] + glycine + H(+) = N(6)-[(R)-S(8)-aminomethyldihydrolipoyl]-L-lysyl-[glycine-cleavage complex H protein] + CO2. In terms of biological role, the glycine cleavage system catalyzes the degradation of glycine. The P protein binds the alpha-amino group of glycine through its pyridoxal phosphate cofactor; CO(2) is released and the remaining methylamine moiety is then transferred to the lipoamide cofactor of the H protein. The polypeptide is Probable glycine dehydrogenase (decarboxylating) subunit 1 (Chlorobaculum tepidum (strain ATCC 49652 / DSM 12025 / NBRC 103806 / TLS) (Chlorobium tepidum)).